Here is a 225-residue protein sequence, read N- to C-terminus: MOB-like protein phocein (225 aa).

Zn(2+)-binding residues include Cys92, Cys97, Cys110, His113, Cys119, His127, His169, and His174.

Belongs to the MOB1/phocein family. Binds STRN4. Interacts with DNM1 and EPS15. Interacts with nucleoside diphosphate kinase. Interacts with CTTNBP2. Interacts with CTTNBP2NL. Part of the core of STRIPAK complexes composed of PP2A catalytic and scaffolding subunits, the striatins (PP2A regulatory subunits), the striatin-associated proteins MOB4, STRIP1 and STRIP2, PDCD10 and members of the STE20 kinases, such as STK24 and STK26. Phosphorylated on serine residues. Highly expressed in adrenal gland, spinal cord, brain and cerebellum. Detected at lower levels in heart and skeletal muscle, and at very low levels in spleen, liver and intestine.

It localises to the cytoplasm. The protein localises to the membrane. It is found in the golgi apparatus. The protein resides in the golgi stack membrane. Functionally, part of the striatin-interacting phosphatase and kinase (STRIPAK) complexes. STRIPAK complexes have critical roles in protein (de)phosphorylation and are regulators of multiple signaling pathways including Hippo, MAPK, nuclear receptor and cytoskeleton remodeling. Different types of STRIPAK complexes are involved in a variety of biological processes such as cell growth, differentiation, apoptosis, metabolism and immune regulation. In Rattus norvegicus (Rat), this protein is MOB-like protein phocein (Mob4).